Consider the following 463-residue polypeptide: SCF E3 ubiquitin ligase complex F-box protein pof2 (463 aa).

Residues 1–42 (MRVPNEVCFNILSYLEADELRCKSTVCTSWRNFIIPTLWEKV) form the F-box domain. 10 LRR repeats span residues 145 to 170 (CPNL…IIKR), 171 to 196 (CPYL…LSEK), 198 to 220 (DLIE…SRLV), 225 to 247 (GLKE…LNLN), 249 to 271 (ELDA…DIEL), 278 to 299 (KLNS…LSLT), 304 to 326 (SLTT…CLLK), 328 to 353 (CKNI…IAKL), 354 to 378 (PYLQ…LSGS), and 380 to 405 (SRNL…LMYN).

In terms of assembly, part of a SCF E3 ubiquitin ligase complex. Interacts with skp1.

Its subcellular location is the mitochondrion. Involved in substrate recognition in ubiquitin-dependent degradation. In Schizosaccharomyces pombe (strain 972 / ATCC 24843) (Fission yeast), this protein is SCF E3 ubiquitin ligase complex F-box protein pof2 (pof2).